The following is a 121-amino-acid chain: Large ribosomal subunit protein bL12 (121 aa).

Belongs to the bacterial ribosomal protein bL12 family. Homodimer. Part of the ribosomal stalk of the 50S ribosomal subunit. Forms a multimeric L10(L12)X complex, where L10 forms an elongated spine to which 2 to 4 L12 dimers bind in a sequential fashion. Binds GTP-bound translation factors.

Its function is as follows. Forms part of the ribosomal stalk which helps the ribosome interact with GTP-bound translation factors. Is thus essential for accurate translation. The polypeptide is Large ribosomal subunit protein bL12 (Pseudomonas putida (strain GB-1)).